The primary structure comprises 88 residues: Putative defensin-like protein 264 (88 aa).

An N-terminal signal peptide occupies residues 1 to 26 (MEKMVLRKVVLLAILLSLSCLWVAKA). Cystine bridges form between Cys-47–Cys-65, Cys-53–Cys-70, and Cys-57–Cys-72.

The protein belongs to the DEFL family.

It is found in the secreted. This chain is Putative defensin-like protein 264, found in Arabidopsis thaliana (Mouse-ear cress).